The primary structure comprises 524 residues: Lysophospholipid acyltransferase LPCAT4 (524 aa).

2 helical membrane passes run 40–62 (CLLGALLAPIRVLLAFIVLFLLW) and 87–107 (TVCHNGVLGLSRLLFFLLGFL). An HXXXXD motif motif is present at residues 129-134 (HSTFFD). Asparagine 152 carries N-linked (GlcNAc...) asparagine glycosylation. A disordered region spans residues 489–524 (PPHTSRGTSQTPNASSPGNPTALANGTVQAPKQKGD). Over residues 493 to 518 (SRGTSQTPNASSPGNPTALANGTVQA) the composition is skewed to polar residues.

Belongs to the 1-acyl-sn-glycerol-3-phosphate acyltransferase family. Widely expressed with predominant level in brain.

It is found in the endoplasmic reticulum membrane. It carries out the reaction a 1-acyl-sn-glycero-3-phosphoethanolamine + an acyl-CoA = a 1,2-diacyl-sn-glycero-3-phosphoethanolamine + CoA. The enzyme catalyses a 1-O-(1Z-alkenyl)-sn-glycero-3-phosphoethanolamine + an acyl-CoA = a 1-O-(1Z-alkenyl)-2-acyl-sn-glycero-3-phosphoethanolamine + CoA. It catalyses the reaction a 1-acyl-sn-glycero-3-phosphocholine + an acyl-CoA = a 1,2-diacyl-sn-glycero-3-phosphocholine + CoA. The catalysed reaction is a 1-O-alkyl-sn-glycero-3-phosphocholine + acetyl-CoA = a 1-O-alkyl-2-acetyl-sn-glycero-3-phosphocholine + CoA. It carries out the reaction a 1-acyl-sn-glycero-3-phospho-L-serine + an acyl-CoA = a 1,2-diacyl-sn-glycero-3-phospho-L-serine + CoA. The enzyme catalyses octanoyl-CoA + a 1-acyl-sn-glycero-3-phosphoethanolamine = 1-acyl-2-octanoyl-sn-glycero-3-phosphoethanolamine + CoA. It catalyses the reaction a 1-acyl-sn-glycero-3-phosphoethanolamine + hexadecanoyl-CoA = 1-acyl-2-hexadecanoyl-sn-glycero-3-phosphoethanolamine + CoA. The catalysed reaction is a 1-acyl-sn-glycero-3-phosphoethanolamine + octadecanoyl-CoA = 1-acyl-2-octadecanoyl-sn-glycero-3-phosphoethanolamine + CoA. It carries out the reaction a 1-acyl-sn-glycero-3-phosphoethanolamine + (9Z)-octadecenoyl-CoA = 1-acyl-2-(9Z)-octadecenoyl-sn-glycero-3-phosphoethanolamine + CoA. The enzyme catalyses a 1-acyl-sn-glycero-3-phosphoethanolamine + (5Z,8Z,11Z,14Z)-eicosatetraenoyl-CoA = 1-acyl-2-(5Z,8Z,11Z,14Z)-eicosatetraenoyl-sn-glycero-3-phosphoethanolamine + CoA. It catalyses the reaction a 1-O-(1Z-alkenyl)-sn-glycero-3-phosphoethanolamine + octanoyl-CoA = 1-O-(1Z)-alkenyl-2-octanoyl-sn-glycero-3-phosphoethanolamine + CoA. The catalysed reaction is a 1-O-(1Z-alkenyl)-sn-glycero-3-phosphoethanolamine + hexadecanoyl-CoA = 1-O-(1Z)-alkenyl-2-hexadecanoyl-sn-glycero-3-phosphoethanolamine + CoA. It carries out the reaction a 1-O-(1Z-alkenyl)-sn-glycero-3-phosphoethanolamine + octadecanoyl-CoA = 1-O-(1Z)-alkenyl-2-octadecanoyl-sn-glycero-3-phosphoethanolamine + CoA. The enzyme catalyses a 1-O-(1Z-alkenyl)-sn-glycero-3-phosphoethanolamine + (9Z)-octadecenoyl-CoA = 1-O-(1Z)-alkenyl-2-(9Z)-octadecenoyl-sn-glycero-3-phosphoethanolamine + CoA. It catalyses the reaction a 1-O-(1Z-alkenyl)-sn-glycero-3-phosphoethanolamine + (5Z,8Z,11Z,14Z)-eicosatetraenoyl-CoA = 1-O-(1Z)-alkenyl-2-(5Z,8Z,11Z,14Z)-eicosatetraenoyl-sn-glycero-3-phosphoethanolamine + CoA. The catalysed reaction is a 1-acyl-sn-glycero-3-phosphocholine + hexadecanoyl-CoA = 1-acyl-2-hexadecanoyl-sn-glycero-3-phosphocholine + CoA. It carries out the reaction a 1-acyl-sn-glycero-3-phosphocholine + (9Z)-octadecenoyl-CoA = a 1-acyl-2-(9Z)-octadecenoyl-sn-glycero-3-phosphocholine + CoA. The enzyme catalyses 1-O-hexadecyl-sn-glycero-3-phosphocholine + (9Z)-octadecenoyl-CoA = 1-O-hexadecyl-2-(9Z)-octadecenoyl-sn-glycero-3-phosphocholine + CoA. It catalyses the reaction 1-O-hexadecyl-sn-glycero-3-phosphocholine + (5Z,8Z,11Z,14Z)-eicosatetraenoyl-CoA = 1-O-hexadecyl-2-(5Z,8Z,11Z,14Z)-eicosatetraenoyl-sn-glycero-3-phosphocholine + CoA. The catalysed reaction is 1-hexadecanoyl-sn-glycero-3-phospho-L-serine + (9Z)-octadecenoyl-CoA = 1-hexadecanoyl-2-(9Z-octadecenoyl)-sn-glycero-3-phospho-L-serine + CoA. It carries out the reaction 1-octadecanoyl-sn-glycero-3-phospho-(1'-sn-glycerol) + (9Z)-octadecenoyl-CoA = 1-octadecanoyl-2-(9Z-octadecenoyl)-sn-glycero-3-phospho-(1'-sn-glycerol) + CoA. The enzyme catalyses 1-octadecanoyl-sn-glycero-3-phospho-(1'-sn-glycerol) + (5Z,8Z,11Z,14Z)-eicosatetraenoyl-CoA = 1-octadecanoyl-2-(5Z,8Z,11Z,14Z-eicosatetraenoyl)-sn-glycero-3-phospho-(1'-sn-glycerol) + CoA. Its pathway is lipid metabolism; phospholipid metabolism. Displays acyl-CoA-dependent lysophospholipid acyltransferase activity with a subset of lysophospholipids as substrates; converts lysophosphatidylethanolamine to phosphatidylethanolamine, lysophosphatidylcholine to phosphatidycholine, 1-alkenyl-lysophatidylethanolamine to 1-alkenyl-phosphatidylethanolamine, lysophosphatidylglycerol and alkyl-lysophosphatidylcholine to phosphatidylglycerol and alkyl-phosphatidylcholine, respectively. In contrast, has no lysophosphatidylinositol, glycerol-3-phosphate, diacylglycerol or lysophosphatidic acid acyltransferase activity. Prefers long chain acyl-CoAs (C16, C18) as acyl donors. This is Lysophospholipid acyltransferase LPCAT4 (LPCAT4) from Homo sapiens (Human).